Consider the following 307-residue polypeptide: 2-dehydropantoate 2-reductase (307 aa).

NADP(+) contacts are provided by residues 7–12 (GSGAMG), Asn-102, and Ala-128. Residue Asn-102 coordinates substrate. The active-site Proton donor is Lys-184. Substrate-binding residues include Asn-188, Asn-192, and Ser-255. Glu-268 contributes to the NADP(+) binding site.

Belongs to the ketopantoate reductase family.

The protein localises to the cytoplasm. The catalysed reaction is (R)-pantoate + NADP(+) = 2-dehydropantoate + NADPH + H(+). The protein operates within cofactor biosynthesis; (R)-pantothenate biosynthesis; (R)-pantoate from 3-methyl-2-oxobutanoate: step 2/2. Its function is as follows. Catalyzes the NADPH-dependent reduction of ketopantoate into pantoic acid. The sequence is that of 2-dehydropantoate 2-reductase (apbA) from Streptococcus pyogenes serotype M18 (strain MGAS8232).